An 838-amino-acid chain; its full sequence is Protein translocase subunit SecA 1 (838 aa).

Residues Q85, 103–107, and D493 contribute to the ATP site; that span reads GEGKT. The Zn(2+) site is built by C823, C825, C834, and H835.

It belongs to the SecA family. Monomer and homodimer. Part of the essential Sec protein translocation apparatus which comprises SecA, SecYEG and auxiliary proteins SecDF. Other proteins may also be involved. Zn(2+) serves as cofactor.

The protein resides in the cell membrane. It localises to the cytoplasm. It carries out the reaction ATP + H2O + cellular proteinSide 1 = ADP + phosphate + cellular proteinSide 2.. Part of the Sec protein translocase complex. Interacts with the SecYEG preprotein conducting channel. Has a central role in coupling the hydrolysis of ATP to the transfer of proteins into and across the cell membrane, serving as an ATP-driven molecular motor driving the stepwise translocation of polypeptide chains across the membrane. This chain is Protein translocase subunit SecA 1, found in Streptococcus gordonii.